We begin with the raw amino-acid sequence, 223 residues long: MMLITTSHRPTRRTRSFGHDLERVFPNSLYLTRGKKTIQELLMEAYDRGYERLLILNVWKGNPLKMTFIKVHPEDWGYLGYLYLHGIKLQREMGFKGLNPIREDMPLVVTTAKRVGWDHIAFAQVFAELTTGKFVPRGDKSLTYIADKYDTDVIAVIERHPRGMVINFYRLDVTKDRPVGPLINVKIWIMEDGRRWDYKEALGIKVPRREKGEGQESSSENRD.

Positions 1-196 (MMLITTSHRP…IWIMEDGRRW (196 aa)) constitute a Brix domain.

In terms of biological role, probably involved in the biogenesis of the ribosome. The sequence is that of Probable Brix domain-containing ribosomal biogenesis protein from Pyrococcus furiosus (strain ATCC 43587 / DSM 3638 / JCM 8422 / Vc1).